The chain runs to 309 residues: Small ribosomal subunit protein uS7m (309 aa).

Residues 39–86 (DSTTSSRLPPRVQIQQQQQQRTQPYSTETTPPPNSNNGDLAGIEGQPP) are disordered. The span at 51-61 (QIQQQQQQRTQ) shows a compositional bias: low complexity.

The protein belongs to the universal ribosomal protein uS7 family. In terms of assembly, component of the mitochondrial small ribosomal subunit (mt-SSU). Mature N.crassa 74S mitochondrial ribosomes consist of a small (37S) and a large (54S) subunit. The 37S small subunit contains a 16S ribosomal RNA (16S mt-rRNA) and 32 different proteins. The 54S large subunit contains a 23S rRNA (23S mt-rRNA) and 42 different proteins.

It localises to the mitochondrion. Functionally, component of the mitochondrial ribosome (mitoribosome), a dedicated translation machinery responsible for the synthesis of mitochondrial genome-encoded proteins, including at least some of the essential transmembrane subunits of the mitochondrial respiratory chain. The mitoribosomes are attached to the mitochondrial inner membrane and translation products are cotranslationally integrated into the membrane. This is Small ribosomal subunit protein uS7m (rsm7) from Neurospora crassa (strain ATCC 24698 / 74-OR23-1A / CBS 708.71 / DSM 1257 / FGSC 987).